A 442-amino-acid chain; its full sequence is QWRF motif-containing protein 6 (442 aa).

Disordered stretches follow at residues 1–144 (MEAK…LSQQ) and 221–240 (FSRL…ADTK). Over residues 57 to 66 (KQHHLQHHQI) the composition is skewed to basic residues. The segment covering 80–89 (KMADGDENRS) has biased composition (basic and acidic residues). The QWRF motif motif lies at 264–267 (QWRF).

This sequence belongs to the QWRF family.

This chain is QWRF motif-containing protein 6 (QWRF6), found in Arabidopsis thaliana (Mouse-ear cress).